A 255-amino-acid chain; its full sequence is Acetylglutamate kinase (255 aa).

Substrate contacts are provided by residues 40–41 (GG), Arg-62, and Asn-153.

Belongs to the acetylglutamate kinase family. ArgB subfamily.

The protein resides in the cytoplasm. It catalyses the reaction N-acetyl-L-glutamate + ATP = N-acetyl-L-glutamyl 5-phosphate + ADP. Its pathway is amino-acid biosynthesis; L-arginine biosynthesis; N(2)-acetyl-L-ornithine from L-glutamate: step 2/4. Catalyzes the ATP-dependent phosphorylation of N-acetyl-L-glutamate. The sequence is that of Acetylglutamate kinase from Bacillus cereus (strain ATCC 10987 / NRS 248).